A 275-amino-acid chain; its full sequence is Large ribosomal subunit protein uL2 (275 aa).

The interval 220-275 is disordered; sequence QTRGAAMNPVDHPHGGGEGKTGSSGHPVSPWGMPAKGFKTRKKKASDKLIISRRKK. Residues 257–275 are compositionally biased toward basic residues; the sequence is FKTRKKKASDKLIISRRKK.

This sequence belongs to the universal ribosomal protein uL2 family. Part of the 50S ribosomal subunit. Forms a bridge to the 30S subunit in the 70S ribosome.

In terms of biological role, one of the primary rRNA binding proteins. Required for association of the 30S and 50S subunits to form the 70S ribosome, for tRNA binding and peptide bond formation. It has been suggested to have peptidyltransferase activity; this is somewhat controversial. Makes several contacts with the 16S rRNA in the 70S ribosome. The sequence is that of Large ribosomal subunit protein uL2 from Wolinella succinogenes (strain ATCC 29543 / DSM 1740 / CCUG 13145 / JCM 31913 / LMG 7466 / NCTC 11488 / FDC 602W) (Vibrio succinogenes).